Reading from the N-terminus, the 215-residue chain is Octanoyltransferase (215 aa).

A BPL/LPL catalytic domain is found at 31–206 (PDSQDEIWLV…QLVKHLDYAE (176 aa)). Substrate contacts are provided by residues 70-77 (RGGQVTYH), 137-139 (SLG), and 150-152 (GLA). Cysteine 168 serves as the catalytic Acyl-thioester intermediate.

Belongs to the LipB family.

The protein localises to the cytoplasm. It carries out the reaction octanoyl-[ACP] + L-lysyl-[protein] = N(6)-octanoyl-L-lysyl-[protein] + holo-[ACP] + H(+). The protein operates within protein modification; protein lipoylation via endogenous pathway; protein N(6)-(lipoyl)lysine from octanoyl-[acyl-carrier-protein]: step 1/2. In terms of biological role, catalyzes the transfer of endogenously produced octanoic acid from octanoyl-acyl-carrier-protein onto the lipoyl domains of lipoate-dependent enzymes. Lipoyl-ACP can also act as a substrate although octanoyl-ACP is likely to be the physiological substrate. The chain is Octanoyltransferase from Pseudomonas putida (strain ATCC 700007 / DSM 6899 / JCM 31910 / BCRC 17059 / LMG 24140 / F1).